The chain runs to 568 residues: Proline--tRNA ligase (568 aa).

This sequence belongs to the class-II aminoacyl-tRNA synthetase family. ProS type 1 subfamily. As to quaternary structure, homodimer.

Its subcellular location is the cytoplasm. The enzyme catalyses tRNA(Pro) + L-proline + ATP = L-prolyl-tRNA(Pro) + AMP + diphosphate. In terms of biological role, catalyzes the attachment of proline to tRNA(Pro) in a two-step reaction: proline is first activated by ATP to form Pro-AMP and then transferred to the acceptor end of tRNA(Pro). As ProRS can inadvertently accommodate and process non-cognate amino acids such as alanine and cysteine, to avoid such errors it has two additional distinct editing activities against alanine. One activity is designated as 'pretransfer' editing and involves the tRNA(Pro)-independent hydrolysis of activated Ala-AMP. The other activity is designated 'posttransfer' editing and involves deacylation of mischarged Ala-tRNA(Pro). The misacylated Cys-tRNA(Pro) is not edited by ProRS. This Listeria innocua serovar 6a (strain ATCC BAA-680 / CLIP 11262) protein is Proline--tRNA ligase.